A 211-amino-acid chain; its full sequence is Ribosomal RNA large subunit methyltransferase E (211 aa).

Positions 55, 57, 75, 93, and 117 each coordinate S-adenosyl-L-methionine. Catalysis depends on K157, which acts as the Proton acceptor.

This sequence belongs to the class I-like SAM-binding methyltransferase superfamily. RNA methyltransferase RlmE family.

It is found in the cytoplasm. It carries out the reaction uridine(2552) in 23S rRNA + S-adenosyl-L-methionine = 2'-O-methyluridine(2552) in 23S rRNA + S-adenosyl-L-homocysteine + H(+). Specifically methylates the uridine in position 2552 of 23S rRNA at the 2'-O position of the ribose in the fully assembled 50S ribosomal subunit. The chain is Ribosomal RNA large subunit methyltransferase E from Methanothermobacter thermautotrophicus (strain ATCC 29096 / DSM 1053 / JCM 10044 / NBRC 100330 / Delta H) (Methanobacterium thermoautotrophicum).